The primary structure comprises 317 residues: Melanocyte-stimulating hormone receptor (317 aa).

Residues 1-37 (MPALGSQRRLLGSLNCTPPATLPFTLAPNRTGPQCLE) are Extracellular-facing. A glycan (N-linked (GlcNAc...) asparagine) is linked at Asn29. The helical transmembrane segment at 38–63 (VSIPDGLFLSLGLVSLVENVLVVAAI) threads the bilayer. The Cytoplasmic portion of the chain corresponds to 64 to 72 (AKNRNLHSP). Residues 73–93 (MYYFICCLAVSDLLVSVSNVL) traverse the membrane as a helical segment. At 94–118 (ETAVMLLLEAGVLATQAAVVQQLDN) the chain is on the extracellular side. A helical transmembrane segment spans residues 119-140 (VIDVLICGSMVSSLCFLGAIAV). At 141-163 (DRYISIFYALRYHSVVTLPRAWR) the chain is on the cytoplasmic side. A helical membrane pass occupies residues 164-183 (IIAAIWVASILTSLLFITYY). Over 184-191 (NHKVILLC) the chain is Extracellular. The helical transmembrane segment at 192–211 (LVGLFIAMLALMAVLYVHML) threads the bilayer. Topologically, residues 212–240 (ARACQHARGIARLQKRQRPIHQGFGLKGA) are cytoplasmic. The chain crosses the membrane as a helical span at residues 241-266 (ATLTILLGVFFLCWGPFFLHLSLIVL). Over 267–279 (CPQHPTCGCIFKN) the chain is Extracellular. A helical membrane pass occupies residues 280 to 300 (FNLFLALIICNAIVDPLIYAF). Over 301-317 (RSQELRKTLQEVLQCSW) the chain is Cytoplasmic. Cys315 carries S-palmitoyl cysteine lipidation.

The protein belongs to the G-protein coupled receptor 1 family. Interacts with MGRN1, but does not undergo MGRN1-mediated ubiquitination; this interaction competes with GNAS-binding and thus inhibits agonist-induced cAMP production. Interacts with OPN3; the interaction results in a decrease in MC1R-mediated cAMP signaling and ultimately a decrease in melanin production in melanocytes. In terms of tissue distribution, highly expressed in the testis.

It localises to the cell membrane. Its function is as follows. Receptor for MSH (alpha, beta) and ACTH. Does not seem to be active with gamma-MSH. The activity of this receptor is mediated by G proteins which activate adenylate cyclase. Mediates melanogenesis, the production of eumelanin (black/brown) and phaeomelanin (red/yellow), via regulation of cAMP signaling in melanocytes. This is Melanocyte-stimulating hormone receptor (MC1R) from Bos taurus (Bovine).